Reading from the N-terminus, the 204-residue chain is Somatotropin (204 aa).

The signal sequence occupies residues 1 to 17; that stretch reads MNSVVLLLSVVCLGVSS. Q18 bears the Pyrrolidone carboxylic acid mark. H36 provides a ligand contact to Zn(2+). A disulfide bridge links C69 with C177. E186 contacts Zn(2+). An intrachain disulfide couples C194 to C202.

It belongs to the somatotropin/prolactin family.

The protein localises to the secreted. Its function is as follows. Growth hormone plays an important role in growth control and involved in the regulation of several anabolic processes. This Oreochromis niloticus (Nile tilapia) protein is Somatotropin (gh).